The chain runs to 274 residues: Probable lipoprotein peptidase YaeF (274 aa).

The signal sequence occupies residues 1 to 20 (MDKPKAYCRLFLPSFLLLSA). Residue Cys-21 is the site of N-palmitoyl cysteine attachment. The S-diacylglycerol cysteine moiety is linked to residue Cys-21. Cys-207 serves as the catalytic Nucleophile. His-257 serves as the catalytic Proton acceptor.

The protein resides in the cell inner membrane. This chain is Probable lipoprotein peptidase YaeF (yaeF), found in Escherichia coli (strain K12).